The chain runs to 189 residues: NADH-quinone oxidoreductase subunit B (189 aa).

Residues C39, C40, C104, and C135 each contribute to the [4Fe-4S] cluster site.

This sequence belongs to the complex I 20 kDa subunit family. As to quaternary structure, NDH-1 is composed of 14 different subunits. Subunits NuoB, C, D, E, F, and G constitute the peripheral sector of the complex. [4Fe-4S] cluster serves as cofactor.

Its subcellular location is the cell inner membrane. It carries out the reaction a quinone + NADH + 5 H(+)(in) = a quinol + NAD(+) + 4 H(+)(out). Its function is as follows. NDH-1 shuttles electrons from NADH, via FMN and iron-sulfur (Fe-S) centers, to quinones in the respiratory chain. The immediate electron acceptor for the enzyme in this species is believed to be a menaquinone. Couples the redox reaction to proton translocation (for every two electrons transferred, four hydrogen ions are translocated across the cytoplasmic membrane), and thus conserves the redox energy in a proton gradient. This chain is NADH-quinone oxidoreductase subunit B, found in Chlorobium phaeobacteroides (strain DSM 266 / SMG 266 / 2430).